A 364-amino-acid polypeptide reads, in one-letter code: CCA-adding enzyme (364 aa).

G19 and R22 together coordinate ATP. G19 and R22 together coordinate CTP. 2 residues coordinate Mg(2+): D32 and D34. Residues R102, R148, and R151 each contribute to the ATP site. Residues R102, R148, and R151 each coordinate CTP.

Belongs to the tRNA nucleotidyltransferase/poly(A) polymerase family. Bacterial CCA-adding enzyme type 2 subfamily. It depends on Mg(2+) as a cofactor.

The catalysed reaction is a tRNA precursor + 2 CTP + ATP = a tRNA with a 3' CCA end + 3 diphosphate. The enzyme catalyses a tRNA with a 3' CCA end + 2 CTP + ATP = a tRNA with a 3' CCACCA end + 3 diphosphate. Catalyzes the addition and repair of the essential 3'-terminal CCA sequence in tRNAs without using a nucleic acid template. Adds these three nucleotides in the order of C, C, and A to the tRNA nucleotide-73, using CTP and ATP as substrates and producing inorganic pyrophosphate. tRNA 3'-terminal CCA addition is required both for tRNA processing and repair. Also involved in tRNA surveillance by mediating tandem CCA addition to generate a CCACCA at the 3' terminus of unstable tRNAs. While stable tRNAs receive only 3'-terminal CCA, unstable tRNAs are marked with CCACCA and rapidly degraded. The sequence is that of CCA-adding enzyme from Bordetella bronchiseptica (strain ATCC BAA-588 / NCTC 13252 / RB50) (Alcaligenes bronchisepticus).